The following is a 254-amino-acid chain: Triosephosphate isomerase (254 aa).

12–14 lines the substrate pocket; that stretch reads NWK. His99 functions as the Electrophile in the catalytic mechanism. The active-site Proton acceptor is Glu169. Residues Gly175, Ser214, and 235–236 contribute to the substrate site; that span reads GG.

Belongs to the triosephosphate isomerase family. As to quaternary structure, homodimer.

The protein resides in the cytoplasm. It catalyses the reaction D-glyceraldehyde 3-phosphate = dihydroxyacetone phosphate. Its pathway is carbohydrate biosynthesis; gluconeogenesis. It participates in carbohydrate degradation; glycolysis; D-glyceraldehyde 3-phosphate from glycerone phosphate: step 1/1. Functionally, involved in the gluconeogenesis. Catalyzes stereospecifically the conversion of dihydroxyacetone phosphate (DHAP) to D-glyceraldehyde-3-phosphate (G3P). This Bartonella tribocorum (strain CIP 105476 / IBS 506) protein is Triosephosphate isomerase.